Reading from the N-terminus, the 425-residue chain is Aspyridones cluster regulator (425 aa).

A DNA-binding region (zn(2)-C6 fungal-type) is located at residues 100-127 (CVDCRASKTRCTGEPEGCKRCTFRKRPC). Residues 132–159 (LRRSNTTQHGEQIEASSSTFTMSDEQGS) form a disordered region. The segment covering 133–157 (RRSNTTQHGEQIEASSSTFTMSDEQ) has biased composition (polar residues).

The protein localises to the nucleus. Transcription factor involved in regulation of gene cluster that mediates the biosynthesis of aphidicolin. This Neocamarosporium betae (Beet black rot fungus) protein is Aspyridones cluster regulator (TF).